Reading from the N-terminus, the 256-residue chain is Ubiquinone/menaquinone biosynthesis C-methyltransferase UbiE (256 aa).

S-adenosyl-L-methionine-binding positions include Thr79, Asp100, and 128–129; that span reads DA.

This sequence belongs to the class I-like SAM-binding methyltransferase superfamily. MenG/UbiE family.

It catalyses the reaction a 2-demethylmenaquinol + S-adenosyl-L-methionine = a menaquinol + S-adenosyl-L-homocysteine + H(+). It carries out the reaction a 2-methoxy-6-(all-trans-polyprenyl)benzene-1,4-diol + S-adenosyl-L-methionine = a 5-methoxy-2-methyl-3-(all-trans-polyprenyl)benzene-1,4-diol + S-adenosyl-L-homocysteine + H(+). It functions in the pathway quinol/quinone metabolism; menaquinone biosynthesis; menaquinol from 1,4-dihydroxy-2-naphthoate: step 2/2. It participates in cofactor biosynthesis; ubiquinone biosynthesis. In terms of biological role, methyltransferase required for the conversion of demethylmenaquinol (DMKH2) to menaquinol (MKH2) and the conversion of 2-polyprenyl-6-methoxy-1,4-benzoquinol (DDMQH2) to 2-polyprenyl-3-methyl-6-methoxy-1,4-benzoquinol (DMQH2). The chain is Ubiquinone/menaquinone biosynthesis C-methyltransferase UbiE from Pseudomonas paraeruginosa (strain DSM 24068 / PA7) (Pseudomonas aeruginosa (strain PA7)).